The following is a 262-amino-acid chain: Nitrilase (262 aa).

Positions 2–237 constitute a CN hydrolase domain; that stretch reads VKVAYVQMNP…EEVGVAEIDL (236 aa). Glu42 functions as the Proton acceptor in the catalytic mechanism. The Proton donor role is filled by Lys113. Cys146 serves as the catalytic Nucleophile. 173 to 174 serves as a coordination point for substrate; sequence VM.

Belongs to the carbon-nitrogen hydrolase superfamily. As to quaternary structure, homodimer.

It catalyses the reaction a nitrile + 2 H2O = a carboxylate + NH4(+). Enzymatic activity is inhibited in the presence of acetone, methanol and metal ions such as Ag(2+) and Hg(2+). Is also inhibited by various thiol reagents such as DTNB, p-chloromercuribenzoate, p-hydroxymercuribenzoate, iodacetamide and iodacetate. EDTA has no influence on activity. In terms of biological role, nitrilase that hydrolyzes preferentially aliphatic nitriles like malononitrile and fumaronitrile in vitro. These dinitriles are converted to the corresponding monoacid mononitriles, showing the enzyme is regioselective. Cannot hydrolyze compounds with a nitrile group bound to an aromatic ring or amino acid. Its biological role is unknown. The sequence is that of Nitrilase from Pyrococcus abyssi (strain GE5 / Orsay).